We begin with the raw amino-acid sequence, 484 residues long: Mitogen-activated protein kinase SLT2/MPK1 (484 aa).

The Protein kinase domain maps to 23 to 318 (FQLIKEIGHG…VDEALEHPYL (296 aa)). ATP is bound by residues 29 to 37 (IGHGAYGIV) and K54. D153 (proton acceptor) is an active-site residue. At T190 the chain carries Phosphothreonine. The TXY motif lies at 190–192 (TEY). Y192 carries the phosphotyrosine modification. A compositionally biased stretch (low complexity) spans 383–392 (QQQQQQQQQP). Disordered regions lie at residues 383–403 (QQQQ…AAAS) and 426–464 (IHSQ…PQND).

The protein belongs to the protein kinase superfamily. CMGC Ser/Thr protein kinase family. MAP kinase subfamily. In terms of assembly, interacts with RLM1. Requires Mg(2+) as cofactor. In terms of processing, dually phosphorylated on Thr-190 and Tyr-192, which activates the enzyme.

It carries out the reaction L-seryl-[protein] + ATP = O-phospho-L-seryl-[protein] + ADP + H(+). The enzyme catalyses L-threonyl-[protein] + ATP = O-phospho-L-threonyl-[protein] + ADP + H(+). Activated by tyrosine and threonine phosphorylation by MKK1 and MKK2. Serine/threonine protein kinase involved in a signal transduction pathway that plays a role in yeast cell morphogenesis and cell growth. This pathway seems to start by SMP3; then involve the kinase PKC1 that may act the BCK1 kinase that then phosphorylates MKK1 and MKK2 which themselves phosphorylate the SLT2/MPK1 kinase which itself then phosphorylates and activates the transcription factor RLM1. Directly phosphorylates BCY1 upon TOR complex 1 (TORC1) inhibition. This is Mitogen-activated protein kinase SLT2/MPK1 (SLT2) from Saccharomyces cerevisiae (strain ATCC 204508 / S288c) (Baker's yeast).